We begin with the raw amino-acid sequence, 477 residues long: Aspartyl/glutamyl-tRNA(Asn/Gln) amidotransferase subunit B (477 aa).

This sequence belongs to the GatB/GatE family. GatB subfamily. In terms of assembly, heterotrimer of A, B and C subunits.

It carries out the reaction L-glutamyl-tRNA(Gln) + L-glutamine + ATP + H2O = L-glutaminyl-tRNA(Gln) + L-glutamate + ADP + phosphate + H(+). It catalyses the reaction L-aspartyl-tRNA(Asn) + L-glutamine + ATP + H2O = L-asparaginyl-tRNA(Asn) + L-glutamate + ADP + phosphate + 2 H(+). Its function is as follows. Allows the formation of correctly charged Asn-tRNA(Asn) or Gln-tRNA(Gln) through the transamidation of misacylated Asp-tRNA(Asn) or Glu-tRNA(Gln) in organisms which lack either or both of asparaginyl-tRNA or glutaminyl-tRNA synthetases. The reaction takes place in the presence of glutamine and ATP through an activated phospho-Asp-tRNA(Asn) or phospho-Glu-tRNA(Gln). The polypeptide is Aspartyl/glutamyl-tRNA(Asn/Gln) amidotransferase subunit B (Legionella pneumophila (strain Lens)).